A 1100-amino-acid chain; its full sequence is cGMP-inhibited 3',5'-cyclic phosphodiesterase 3B (1100 aa).

Basic and acidic residues predominate over residues 1–11; the sequence is MRKDERERDAP. Positions 1-28 are interaction with RAPGEF3; it reads MRKDERERDAPAMRSPPPPPASAASPPE. Residues 1-29 are disordered; sequence MRKDERERDAPAMRSPPPPPASAASPPES. Residue serine 15 is modified to Phosphoserine. Transmembrane regions (helical) follow at residues 69–89, 110–130, 140–160, 170–190, 198–218, and 225–245; these read AGARLSLGVLAAFVLAALLGA, LSLSPLFSIACAFFFLTCFLT, AGSWWLLALPACCYLGDFAAW, PAAAGRLCLVLSCVGLLTLAP, VLVLLFAGLVWWVSFSGLGAL, and LLSCLVGGAGCLLALGLDHFF. Serine 273 is subject to Phosphoserine; by PKB/AKT1 or PKB/AKT2. Phosphoserine occurs at positions 274 and 421. Disordered regions lie at residues 400 to 423 and 570 to 590; these read RKLHKGLSGRTSFPTPQLRRSSGA and EPDGTDHPSEKSGEEDSSVFS. The span at 408-423 shows a compositional bias: polar residues; it reads GRTSFPTPQLRRSSGA. The tract at residues 415-439 is interaction with PIK3R6; it reads PQLRRSSGASSLLTNEHCSRWDRSS. Basic and acidic residues predominate over residues 573-583; sequence GTDHPSEKSGE. In terms of domain architecture, PDEase spans 627-1061; the sequence is PNIDQEVSLD…KIWKEIIEEE (435 aa). The active-site Proton donor is histidine 713. Histidine 713 is a binding site for AMP. Residues histidine 717, histidine 797, aspartate 798, and aspartate 913 each coordinate Mg(2+). AMP is bound by residues aspartate 798, aspartate 913, and glutamine 964. Acidic residues predominate over residues 993–1024; sequence EEGDDTESDDDDDDDDGDGGEELDSDDEETED. The tract at residues 993-1033 is disordered; sequence EEGDDTESDDDDDDDDGDGGEELDSDDEETEDNLNPKPQRR. Positions 1044 to 1079 form a coiled coil; that stretch reads MHHLTENHKIWKEIIEEEEEKCKAEGNKLQVDNASL.

It belongs to the cyclic nucleotide phosphodiesterase family. PDE3 subfamily. Homodimer. Interacts with PIK3CG; regulates PDE3B activity and thereby cAMP levels in cells. Interacts with RAPGEF3 and PIK3R6; form a signaling complex that regulates phosphatidylinositol 3-kinase gamma in angiogenesis. Interacts with ABHD15; this interaction regulates PDE3B's stability and expression and, thereby, impacts the antilipolytic action of insulin. Mg(2+) serves as cofactor. The cofactor is Mn(2+). Phosphorylation at Ser-273 mediates insulin-induced activation of PDE3B. Abundant in adipose tissues.

Its subcellular location is the membrane. The catalysed reaction is a nucleoside 3',5'-cyclic phosphate + H2O = a nucleoside 5'-phosphate + H(+). The enzyme catalyses 3',5'-cyclic AMP + H2O = AMP + H(+). It carries out the reaction 3',5'-cyclic GMP + H2O = GMP + H(+). Inhibited by cGMP. Cyclic nucleotide phosphodiesterase with a dual-specificity for the second messengers cAMP and cGMP, which are key regulators of many important physiological processes. Regulates angiogenesis by inhibiting the cAMP-dependent guanine nucleotide exchange factor RAPGEF3 and downstream phosphatidylinositol 3-kinase gamma-mediated signaling. Controls cardiac contractility by reducing cAMP concentration in cardiocytes. This Mus musculus (Mouse) protein is cGMP-inhibited 3',5'-cyclic phosphodiesterase 3B.